A 460-amino-acid polypeptide reads, in one-letter code: NADH-ubiquinone oxidoreductase chain 4 (460 aa).

The next 13 helical transmembrane spans lie at 22-42 (WLWP…ITWL), 61-81 (PLST…LLAS), 94-113 (RMYI…AFGA), 117-139 (IMFY…RWGN), 148-168 (TYFL…LLML), 195-217 (IWWA…HLWL), 225-245 (PVAG…YGMM), 258-278 (MVYP…SICL), 285-304 (SLIA…GILI), 308-330 (WGFT…LFCL), 351-371 (IALP…LALP), 394-414 (LILT…MFLM), and 436-456 (LLMA…ALLW).

The protein belongs to the complex I subunit 4 family.

It is found in the mitochondrion membrane. It catalyses the reaction a ubiquinone + NADH + 5 H(+)(in) = a ubiquinol + NAD(+) + 4 H(+)(out). Functionally, core subunit of the mitochondrial membrane respiratory chain NADH dehydrogenase (Complex I) that is believed to belong to the minimal assembly required for catalysis. Complex I functions in the transfer of electrons from NADH to the respiratory chain. The immediate electron acceptor for the enzyme is believed to be ubiquinone. The protein is NADH-ubiquinone oxidoreductase chain 4 (MT-ND4) of Gadus morhua (Atlantic cod).